Consider the following 29-residue polypeptide: Kalata-B4 (29 aa).

The segment at residues 1 to 29 (GLPVCGETCVGGTCNTPGCTCSWPVCTRD) is a cross-link (cyclopeptide (Gly-Asp)). 3 disulfides stabilise this stretch: cysteine 5/cysteine 19, cysteine 9/cysteine 21, and cysteine 14/cysteine 26.

Post-translationally, this is a cyclic peptide.

Functionally, probably participates in a plant defense mechanism. The sequence is that of Kalata-B4 from Oldenlandia affinis.